Reading from the N-terminus, the 230-residue chain is MEPSTNKPDCKKIFDSIASKYDRTNTILSLGMHHFWNRSLIQILGSGYSLLDLCAGTGKVAKRYIAAHPQASVTLVDFSSAMLDIAKQHLPQGSCSFIHSDINQLPLENHSYPLAAMAYGLRNLSDPHKALQEISRVLMPSGKLGILELTPPKKTHPTYSAHKLYLRAVVPWIGKSVSKDPDAYSYLSKSIQQLPKDHDLEDLFSKSGFYIAKKKKLFLGAATIWLLEKQ.

S-adenosyl-L-methionine contacts are provided by residues Thr-57, Asp-77, and 101–102; that span reads DI.

Belongs to the class I-like SAM-binding methyltransferase superfamily. MenG/UbiE family.

The enzyme catalyses a 2-demethylmenaquinol + S-adenosyl-L-methionine = a menaquinol + S-adenosyl-L-homocysteine + H(+). It functions in the pathway quinol/quinone metabolism; menaquinone biosynthesis; menaquinol from 1,4-dihydroxy-2-naphthoate: step 2/2. Methyltransferase required for the conversion of demethylmenaquinol (DMKH2) to menaquinol (MKH2). The chain is Demethylmenaquinone methyltransferase from Chlamydia pneumoniae (Chlamydophila pneumoniae).